Consider the following 1113-residue polypeptide: Myosin-binding protein 1 (1113 aa).

Residues 12 to 34 (LAFNEWLLMFMLFVNSIFSYVIA) form a helical membrane-spanning segment. The disordered stretch occupies residues 209–229 (ESEAVFSDTEPKQESSLNHLP). The GTD-binding domain occupies 888-986 (SEGDRLKRQV…DLEAEIEYFR (99 aa)).

As to quaternary structure, interacts with myosin XI-K, XI-I and XI-1. As to expression, expressed in leaf epidermal cells, roots and root hairs.

It localises to the endomembrane system. Membrane-anchored myosin receptors that define a distinct, plant-specific transport vesicle compartment. In Arabidopsis thaliana (Mouse-ear cress), this protein is Myosin-binding protein 1.